Consider the following 268-residue polypeptide: UPF0739 protein C1orf74 homolog (268 aa).

The protein belongs to the UPF0739 family.

This Salmo salar (Atlantic salmon) protein is UPF0739 protein C1orf74 homolog.